The chain runs to 210 residues: Cell division protein SepF (210 aa).

Disordered stretches follow at residues 22–72 and 79–98; these read DYYE…FDDA and RGPR…RGST. Basic and acidic residues-rich tracts occupy residues 37 to 60 and 79 to 88; these read RPRE…REYD and RGPREFDRTP.

Belongs to the SepF family. In terms of assembly, homodimer. Interacts with FtsZ.

The protein resides in the cytoplasm. Cell division protein that is part of the divisome complex and is recruited early to the Z-ring. Probably stimulates Z-ring formation, perhaps through the cross-linking of FtsZ protofilaments. Its function overlaps with FtsA. The polypeptide is Cell division protein SepF (Mycolicibacterium vanbaalenii (strain DSM 7251 / JCM 13017 / BCRC 16820 / KCTC 9966 / NRRL B-24157 / PYR-1) (Mycobacterium vanbaalenii)).